The following is a 268-amino-acid chain: 4-pyridoxolactonase (268 aa).

Residues His96, His98, Asp100, His101, His185, Asp207, and His252 each contribute to the Zn(2+) site. Asp100 (proton donor/acceptor) is an active-site residue.

This sequence belongs to the metallo-beta-lactamase superfamily. As to quaternary structure, homodimer. Zn(2+) serves as cofactor.

It catalyses the reaction 4-pyridoxolactone + H2O = 4-pyridoxate + H(+). It participates in cofactor degradation; B6 vitamer degradation; 4-pyridoxate from pyridoxal: step 2/2. With respect to regulation, inhibited by Hg(2+). Involved in the degradation of pyridoxine or pyridoxamine (free, phosphate-unbound, forms of vitamin B6). Hydrolyzes 4-pyridoxolactone to 4-pyridoxic acid. Has lower activity toward N-hexanoyl-D,L-homoserine lactone, but is not active toward 5-pyridoxolactone and gamma-butyrolactone. The polypeptide is 4-pyridoxolactonase (Mesorhizobium japonicum (strain LMG 29417 / CECT 9101 / MAFF 303099) (Mesorhizobium loti (strain MAFF 303099))).